The following is a 64-amino-acid chain: Anti-sigma-G factor Gin (64 aa).

The Zn(2+) site is built by cysteine 11, cysteine 14, cysteine 30, and cysteine 33.

As to quaternary structure, probably functions as a homodimer. Interacts with sigma-G factor, recognition occurs via the first 71 residues of sigma-G. It depends on Zn(2+) as a cofactor.

An anti-sigma-G factor, prevents premature activation of sigma-G factor in the forespore; overexpression leads to 1000-fold reduction in spore formation, spore formation stops after engulfment. Overexpression also inhibits sigma-G transcription activation activity. When both Gin and sigma-G are expressed in E.coli Gin inhibits sigma-G, strongly suggesting Gin inhibits by direct physical interaction. The protein is Anti-sigma-G factor Gin of Bacillus subtilis (strain 168).